Here is a 636-residue protein sequence, read N- to C-terminus: p-hydroxybenzoate-m-hydroxylase (636 aa).

FAD-binding positions include 11 to 40, 242 to 244, Tyr-290, and Asp-311; these read DIVI…HIDN and RLY. The chain crosses the membrane as a helical span at residues 12–33; sequence IVIVGAGPVGILLSLCMSRWGY. A glycan (N-linked (GlcNAc...) asparagine) is linked at Asn-573.

It belongs to the PheA/TfdB FAD monooxygenase family. It depends on FAD as a cofactor.

The protein localises to the membrane. The catalysed reaction is 4-hydroxybenzoate + NADH + O2 + H(+) = 3,4-dihydroxybenzoate + NAD(+) + H2O. It catalyses the reaction 4-hydroxybenzoate + NADPH + O2 + H(+) = 3,4-dihydroxybenzoate + NADP(+) + H2O. In terms of biological role, FAD-dependent monooxygenase; part of the benzoic acid degradation pathway also known as the protocatechuic acid pathway. Benzoic acid debradation begins with the conversion of benzoic acid into 4-hydroxybenzoic acid through hydroxylation by the benzoate-4-monooxygenase bphA, and its partner NADPH-cytochrome P450 reductase cprA which act as a mediator in electron donation from NADPH. 4-Hydroxybenzoic acid is then converted into 3,4-dihydroxybenzoic acid (also called protocatechuic acid) by the p-hydroxybenzoate-m-hydroxylase phhA. Protocatechuic acid is converted into 3-carboxy-cis,cis-muconic acid by the intradiol ring-cleavage dioxygenase prcA, which is further metabolized through the 3-oxoadipate pathway to finally enter the tricarboxylic acid cycle (TCA). In Emericella nidulans (strain FGSC A4 / ATCC 38163 / CBS 112.46 / NRRL 194 / M139) (Aspergillus nidulans), this protein is p-hydroxybenzoate-m-hydroxylase.